The sequence spans 212 residues: Pyridoxine/pyridoxamine 5'-phosphate oxidase (212 aa).

Substrate is bound by residues 8 to 11 and lysine 66; that span reads RREY. Residues 61–66, 76–77, arginine 82, lysine 83, and glutamine 105 each bind FMN; these read RIVLLK and FT. The substrate site is built by tyrosine 123, arginine 127, and serine 131. FMN is bound by residues 140 to 141 and tryptophan 185; that span reads QS. 191-193 provides a ligand contact to substrate; sequence RLH. Arginine 195 is an FMN binding site.

Belongs to the pyridoxamine 5'-phosphate oxidase family. In terms of assembly, homodimer. FMN is required as a cofactor.

It carries out the reaction pyridoxamine 5'-phosphate + O2 + H2O = pyridoxal 5'-phosphate + H2O2 + NH4(+). It catalyses the reaction pyridoxine 5'-phosphate + O2 = pyridoxal 5'-phosphate + H2O2. Its pathway is cofactor metabolism; pyridoxal 5'-phosphate salvage; pyridoxal 5'-phosphate from pyridoxamine 5'-phosphate: step 1/1. It participates in cofactor metabolism; pyridoxal 5'-phosphate salvage; pyridoxal 5'-phosphate from pyridoxine 5'-phosphate: step 1/1. Functionally, catalyzes the oxidation of either pyridoxine 5'-phosphate (PNP) or pyridoxamine 5'-phosphate (PMP) into pyridoxal 5'-phosphate (PLP). The polypeptide is Pyridoxine/pyridoxamine 5'-phosphate oxidase (Shewanella baltica (strain OS223)).